The following is a 1197-amino-acid chain: Sensor protein EvgS (1197 aa).

An N-terminal signal peptide occupies residues 1–21 (MKFLPYIFLLCCGLWSTISFA). Residues 22-325 (DEDYIEYRGI…SMTDENGSVR (304 aa)) are Cytoplasmic-facing. The chain crosses the membrane as a helical span at residues 326 to 346 (GVMGDILNIITLQTGLNFSPI). The Periplasmic portion of the chain corresponds to 347-537 (TVSHNIHAGT…TWDLYSEQFY (191 aa)). A helical transmembrane segment spans residues 538-558 (IVTTLSVLLVGSSLLWGFYLL). The Cytoplasmic portion of the chain corresponds to 559 to 1197 (RSVRRRKVIQ…EIAVFCQKND (639 aa)). The 221-residue stretch at 718-938 (TMSHEIRTPI…TFTITIPVEI (221 aa)) folds into the Histidine kinase domain. At His721 the chain carries Phosphohistidine; by autocatalysis. The Response regulatory domain maps to 960 to 1074 (SILIADDHPT…VLKTHLSQLH (115 aa)). The residue at position 1009 (Asp1009) is a 4-aspartylphosphate. The HPt domain maps to 1098–1197 (DLQLMQEILM…EIAVFCQKND (100 aa)). A Phosphohistidine modification is found at His1137.

Activation requires a sequential transfer of a phosphate group from a His in the primary transmitter domain, to an Asp in the receiver domain and to a His in the secondary transmitter domain.

Its subcellular location is the cell inner membrane. It catalyses the reaction ATP + protein L-histidine = ADP + protein N-phospho-L-histidine.. Its function is as follows. Member of the two-component regulatory system EvgS/EvgA. Phosphorylates EvgA via a four-step phosphorelay in response to environmental signals. This Escherichia coli (strain K12) protein is Sensor protein EvgS (evgS).